The sequence spans 478 residues: Mannose-1-phosphate guanylyltransferase (478 aa).

This sequence belongs to the mannose-6-phosphate isomerase type 2 family.

It carries out the reaction alpha-D-mannose 1-phosphate + GTP + H(+) = GDP-alpha-D-mannose + diphosphate. It functions in the pathway nucleotide-sugar biosynthesis; GDP-alpha-D-mannose biosynthesis; GDP-alpha-D-mannose from alpha-D-mannose 1-phosphate (GTP route): step 1/1. Involved in the biosynthesis of the capsular polysaccharide colanic acid. The protein is Mannose-1-phosphate guanylyltransferase (manC) of Escherichia coli (strain K12).